The primary structure comprises 437 residues: GTPase Obg (437 aa).

An Obg domain is found at 2–160 (SMFLDTAKIS…RQLELELKIL (159 aa)). The OBG-type G domain occupies 161–338 (ADVGLVGFPS…LLEATAELLA (178 aa)). GTP-binding positions include 167-174 (GFPSVGKS), 192-196 (FTTIV), 214-217 (DLPG), 284-287 (NKMD), and 319-321 (SSL). Mg(2+) is bound by residues serine 174 and threonine 194. One can recognise an OCT domain in the interval 359–437 (GFAKTEKDFE…IGKFEFEFVD (79 aa)).

It belongs to the TRAFAC class OBG-HflX-like GTPase superfamily. OBG GTPase family. As to quaternary structure, monomer. Mg(2+) is required as a cofactor.

The protein resides in the cytoplasm. Its function is as follows. An essential GTPase which binds GTP, GDP and possibly (p)ppGpp with moderate affinity, with high nucleotide exchange rates and a fairly low GTP hydrolysis rate. Plays a role in control of the cell cycle, stress response, ribosome biogenesis and in those bacteria that undergo differentiation, in morphogenesis control. This is GTPase Obg from Streptococcus pyogenes serotype M2 (strain MGAS10270).